The sequence spans 116 residues: Ribosome-binding factor A (116 aa).

This sequence belongs to the RbfA family. In terms of assembly, monomer. Binds 30S ribosomal subunits, but not 50S ribosomal subunits or 70S ribosomes.

Its subcellular location is the cytoplasm. Its function is as follows. One of several proteins that assist in the late maturation steps of the functional core of the 30S ribosomal subunit. Associates with free 30S ribosomal subunits (but not with 30S subunits that are part of 70S ribosomes or polysomes). Required for efficient processing of 16S rRNA. May interact with the 5'-terminal helix region of 16S rRNA. The polypeptide is Ribosome-binding factor A (Streptococcus pyogenes serotype M3 (strain SSI-1)).